We begin with the raw amino-acid sequence, 515 residues long: Interferon alpha/beta receptor 2 (515 aa).

A signal peptide spans 1–26 (MLLSQNAFIFRSLNLVLMVYISLVFG). The Extracellular portion of the chain corresponds to 27–243 (ISYDSPDYTD…QESESAESAK (217 aa)). Intrachain disulfides connect C39–C122 and C85–C93. 5 N-linked (GlcNAc...) asparagine glycosylation sites follow: N58, N87, N116, N188, and N192. C207 and C227 are disulfide-bonded. The helical transmembrane segment at 244 to 264 (IGGIITVFLIALVLTSTIVTL) threads the bilayer. Residues 265–515 (KWIGYICLRN…VDLGDGYIMR (251 aa)) are Cytoplasmic-facing. 2 disordered regions span residues 318 to 418 (YDDE…EGSG) and 455 to 515 (EMVD…YIMR). Residue Y337 is modified to Phosphotyrosine. Residues 362–375 (PESEEEPDLPEVDV) show a composition bias toward acidic residues. Position 400 is a phosphoserine (S400). The segment at 418 to 444 (GGRITFNVDLNSVFLRVLDDEDSDDLE) is mediates interaction with STAT2 (and required for the recruitment of USP18). Positions 464–488 (NVQSNHLLASGEGTQPTFPSPSSEG) are enriched in polar residues. S467 is modified (phosphoserine). The residue at position 512 (Y512) is a Phosphotyrosine.

Belongs to the type II cytokine receptor family. In terms of assembly, heterodimer with IFNAR1; forming the receptor for type I interferon. Interacts with JAK1. Interacts with the transcriptional factors STAT1 and STAT2. Interacts with USP18; indirectly via STAT2, it negatively regulates the assembly of the ternary interferon-IFNAR1-IFNAR2 complex and therefore type I interferon signaling. Post-translationally, phosphorylated on tyrosine residues upon interferon binding. Phosphorylation at Tyr-337 or Tyr-512 are sufficient to mediate interferon dependent activation of STAT1, STAT2 and STAT3 leading to antiproliferative effects on many different cell types. In terms of processing, glycosylated. As to expression, isoform 3 is detected in the urine (at protein level). Expressed in blood cells. Expressed in lymphoblastoid and fibrosarcoma cell lines.

It is found in the cell membrane. Its subcellular location is the secreted. Functionally, together with IFNAR1, forms the heterodimeric receptor for type I interferons (including interferons alpha, beta, epsilon, omega and kappa). Type I interferon binding activates the JAK-STAT signaling cascade, resulting in transcriptional activation or repression of interferon-regulated genes that encode the effectors of the interferon response. Mechanistically, type I interferon-binding brings the IFNAR1 and IFNAR2 subunits into close proximity with one another, driving their associated Janus kinases (JAKs) (TYK2 bound to IFNAR1 and JAK1 bound to IFNAR2) to cross-phosphorylate one another. The activated kinases phosphorylate specific tyrosine residues on the intracellular domains of IFNAR1 and IFNAR2, forming docking sites for the STAT transcription factors (STAT1, STAT2 and STAT). STAT proteins are then phosphorylated by the JAKs, promoting their translocation into the nucleus to regulate expression of interferon-regulated genes. Its function is as follows. Potent inhibitor of type I IFN receptor activity. The sequence is that of Interferon alpha/beta receptor 2 (IFNAR2) from Homo sapiens (Human).